Reading from the N-terminus, the 319-residue chain is MKNIAILSSGGDVSGMNPAIKHFVEYALHNGLTPYFVYNGFEGLIDNKITKASHSDVAGIINRGGTILGSSRSKRFMLKNYREVAKKNLDALDIDMLIVLGGDGSFRGMDIFYKEHGVKFCGIPSTIDNDINGTIYCLGVDTALNVIKDSIDNIRDTASSFSRAFVIETMGRDCGYLALVSSLCSGAELCLIPEVEYNLSSYEDSFKEQIKNGRKYFIVIVSEGIKDNSKEIAEWLEQKVGIESRVTVLGHTQRGGTPSIYDRLMAYKFVNHAIDALLGDINSSVVCYSKTGFIHKDIDEITSQKYMLDPELLSYLKKF.

ATP is bound by residues Gly-11, 72–73 (RS), and 102–105 (GDGS). Asp-103 serves as a coordination point for Mg(2+). Residue 126–128 (TID) participates in substrate binding. Catalysis depends on Asp-128, which acts as the Proton acceptor. Arg-155 is an ADP binding site. Residues Arg-163 and 170 to 172 (MGR) each bind substrate. Residue 186–188 (GAE) participates in ADP binding. Substrate-binding positions include Glu-223, Arg-245, and 251–254 (HTQR).

This sequence belongs to the phosphofructokinase type A (PFKA) family. ATP-dependent PFK group I subfamily. Prokaryotic clade 'B1' sub-subfamily. As to quaternary structure, homotetramer. Mg(2+) serves as cofactor.

It localises to the cytoplasm. The enzyme catalyses beta-D-fructose 6-phosphate + ATP = beta-D-fructose 1,6-bisphosphate + ADP + H(+). The protein operates within carbohydrate degradation; glycolysis; D-glyceraldehyde 3-phosphate and glycerone phosphate from D-glucose: step 3/4. Its activity is regulated as follows. Allosterically activated by ADP and other diphosphonucleosides, and allosterically inhibited by phosphoenolpyruvate. Functionally, catalyzes the phosphorylation of D-fructose 6-phosphate to fructose 1,6-bisphosphate by ATP, the first committing step of glycolysis. The sequence is that of ATP-dependent 6-phosphofructokinase from Sulfurimonas denitrificans (strain ATCC 33889 / DSM 1251) (Thiomicrospira denitrificans (strain ATCC 33889 / DSM 1251)).